The sequence spans 719 residues: BRCA1-A complex subunit RAP80 (719 aa).

The interval 1–30 (MPRRKKKVKEVSESRNLEKKDVETTSSVSV) is disordered. The interval 1-101 (MPRRKKKVKE…SEQEAREVNS (101 aa)) is necessary for transcriptional repression. Over residues 9–23 (KEVSESRNLEKKDVE) the composition is skewed to basic and acidic residues. Lys-20 participates in a covalent cross-link: Glycyl lysine isopeptide (Lys-Gly) (interchain with G-Cter in SUMO2). Ser-29 is subject to Phosphoserine. Residue Lys-31 forms a Glycyl lysine isopeptide (Lys-Gly) (interchain with G-Cter in SUMO2) linkage. The segment at 43 to 68 (ISDSDGEEPKEENGLQKTKTKQSNRA) is disordered. A phosphoserine mark is found at Ser-44 and Ser-46. The short motif at 60 to 78 (TKTKQSNRAKCLAKRKIAQ) is the LR motif element. Residues Lys-75 and Lys-90 each participate in a glycyl lysine isopeptide (Lys-Gly) (interchain with G-Cter in SUMO2) cross-link. In terms of domain architecture, UIM 1 spans 80 to 99 (TEEEQFALALKMSEQEAREV). 2 disordered regions span residues 93–152 (EQEA…DSGL) and 164–205 (LFKG…DQSS). The interval 97-103 (REVNSQE) is UIM-linker. The tract at residues 100 to 200 (NSQEEEEEEL…EEPVSGSSGS (101 aa)) is necessary for interaction with NR6A1 N-terminus. Phosphoserine is present on Ser-101. The 20-residue stretch at 105–124 (EEEELLRKAIAESLNSCRPS) folds into the UIM 2 domain. A compositionally biased stretch (polar residues) spans 117–130 (SLNSCRPSDASATR). Ser-140 is modified (phosphoserine). Residue Lys-188 forms a Glycyl lysine isopeptide (Lys-Gly) (interchain with G-Cter in SUMO2) linkage. Over residues 195–205 (SGSSGSWDQSS) the composition is skewed to low complexity. Ser-205 bears the Phosphoserine mark. Lys-245 participates in a covalent cross-link: Glycyl lysine isopeptide (Lys-Gly) (interchain with G-Cter in SUMO2). The interval 270-400 (TGGTVNYFWG…EEEPTTSHGQ (131 aa)) is AIR. The segment at 320-378 (FGEPVLPRPPSLIQNECGQGEQASEKNECISEDMGDEDKEERQESRASDWHSKTKDFQE) is disordered. Over residues 349–358 (ISEDMGDEDK) the composition is skewed to acidic residues. A compositionally biased stretch (basic and acidic residues) spans 359–378 (EERQESRASDWHSKTKDFQE). The residue at position 379 (Ser-379) is a Phosphoserine. Residues Lys-382 and Lys-387 each participate in a glycyl lysine isopeptide (Lys-Gly) (interchain with G-Cter in SUMO2) cross-link. The segment at 391-422 (EEEPTTSHGQSSQGIVEETSEEGNSVPASQSV) is disordered. The tract at residues 400–500 (QSSQGIVEET…EVAISTFSSS (101 aa)) is necessary for interaction with NR6A1 C-terminus. Residues Ser-402 and Ser-419 each carry the phosphoserine modification. Over residues 412 to 422 (EGNSVPASQSV) the composition is skewed to polar residues. Lys-428 participates in a covalent cross-link: Glycyl lysine isopeptide (Lys-Gly) (interchain with G-Cter in SUMO2). Ser-466 bears the Phosphoserine mark. The UBZ4-type zinc finger occupies 502–529 (QVSCPLCDQCFPPTKIERHAMYCNGLME). The Zn(2+) site is built by Cys-505, Cys-508, His-520, and Cys-524. The interval 505–582 (CPLCDQCFPP…REYQCHVDSC (78 aa)) is zinc-finger-like region. Glycyl lysine isopeptide (Lys-Gly) (interchain with G-Cter in SUMO2) cross-links involve residues Lys-544, Lys-559, Lys-562, Lys-587, and Lys-607. Residues 588 to 668 (ADQGDGPEGS…AGCSREMQSS (81 aa)) form a disordered region. Basic and acidic residues predominate over residues 614–623 (NPKEKGHSEG). Ser-627 is modified (phosphoserine). The segment covering 631 to 643 (QSEHKTSDADIKS) has biased composition (basic and acidic residues). Glycyl lysine isopeptide (Lys-Gly) (interchain with G-Cter in SUMO2) cross-links involve residues Lys-635 and Lys-642. A phosphoserine mark is found at Ser-653 and Ser-677. Glycyl lysine isopeptide (Lys-Gly) (interchain with G-Cter in SUMO2) cross-links involve residues Lys-696 and Lys-697.

Belongs to the RAP80 family. As to quaternary structure, component of the ARISC complex, at least composed of UIMC1/RAP80, ABRAXAS1, BRCC3/BRCC36, BABAM2 and BABAM1/NBA1. Component of the BRCA1-A complex, at least composed of the BRCA1, BARD1, UIMC1/RAP80, ABRAXAS1, BRCC3/BRCC36, BABAM2 and BABAM1/NBA1. In the BRCA1-A complex, interacts directly with ABRAXAS1. Interacts with UBE2I. Interacts with NR6A1. Interacts with ESR1. Interacts with TSP57. Interacts with TRAIP. Sumoylated. In terms of processing, phosphorylated upon DNA damage by ATM or ATR. As to expression, expressed in testis, ovary, thymus and heart. Expressed in germ cells of the testis.

Its subcellular location is the nucleus. Its function is as follows. Ubiquitin-binding protein. Specifically recognizes and binds 'Lys-63'-linked ubiquitin. Plays a central role in the BRCA1-A complex by specifically binding 'Lys-63'-linked ubiquitinated histones H2A and H2AX at DNA lesions sites, leading to target the BRCA1-BARD1 heterodimer to sites of DNA damage at double-strand breaks (DSBs). The BRCA1-A complex also possesses deubiquitinase activity that specifically removes 'Lys-63'-linked ubiquitin on histones H2A and H2AX. Also weakly binds monoubiquitin but with much less affinity than 'Lys-63'-linked ubiquitin. May interact with monoubiquitinated histones H2A and H2B; the relevance of such results is however unclear in vivo. Does not bind Lys-48'-linked ubiquitin. May indirectly act as a transcriptional repressor by inhibiting the interaction of NR6A1 with the corepressor NCOR1. The sequence is that of BRCA1-A complex subunit RAP80 (UIMC1) from Homo sapiens (Human).